The following is a 310-amino-acid chain: p-hydroxybenzoic acid efflux pump subunit AaeA (310 aa).

The helical transmembrane segment at 12–32 (AITVVLVILAFIAIFNAWVYY) threads the bilayer.

This sequence belongs to the membrane fusion protein (MFP) (TC 8.A.1) family.

It is found in the cell inner membrane. Its function is as follows. Forms an efflux pump with AaeB. The sequence is that of p-hydroxybenzoic acid efflux pump subunit AaeA from Shigella flexneri.